The sequence spans 929 residues: Synaptopodin (929 aa).

Residue methionine 1 is modified to N-acetylmethionine. Residues 1 to 12 (MLGPHLPPPPLA) are compositionally biased toward pro residues. A disordered region spans residues 1 to 260 (MLGPHLPPPP…EASLLRHLEK (260 aa)). Composition is skewed to basic and acidic residues over residues 60–69 (GVSRSGDDSA) and 91–110 (SREE…DWDV). The residue at position 140 (serine 140) is a Phosphoserine. The segment covering 142–151 (TEKDLKEAKA) has biased composition (basic and acidic residues). Residues 152 to 170 (RSQQIAAQLTTPPSSNSRG) show a composition bias toward polar residues. Serine 207 is modified (phosphoserine). A compositionally biased stretch (pro residues) spans 224–234 (EPGPPRHPSPQ). Residue serine 263 is modified to Phosphoserine. The disordered stretch occupies residues 285 to 389 (GLHLSQNREA…TLCADGQPQA (105 aa)). Residues 317 to 332 (LASPSATLTTPTSNSS) are compositionally biased toward low complexity. Asparagine 330 is a glycosylation site (N-linked (GlcNAc...) asparagine). Positions 333–379 (HNPPATDVNQNPPATVVPQSLPLSSIQQNSSEAQLPSNGTGPASKPS) are enriched in polar residues. Phosphoserine occurs at positions 501 and 525. A disordered region spans residues 509-558 (FGEKAPAPQPPSLPDRSPRPQRHIMSRSPMVERRMMGQRSPASERRPLGN). Threonine 560 is subject to Phosphothreonine. Residues 562-565 (PPTY) carry the PPxY motif motif. Serine 580 is modified (phosphoserine). Residues 581-584 (PPSY) carry the PPxY motif motif. Disordered regions lie at residues 589–610 (PSSD…KTGI) and 630–726 (KPKV…KGAE). The span at 646–656 (ADEKRRQRDQG) shows a compositional bias: basic and acidic residues. Phosphoserine is present on residues serine 685, serine 702, and tyrosine 738. Over residues 685–698 (SPAAAEEVVPEWAS) the composition is skewed to low complexity. The segment at 740–763 (IESSSHTPELARCPSPTMSLPSSW) is disordered. At threonine 746 the chain carries Phosphothreonine. 3 positions are modified to phosphoserine: serine 754, serine 758, and serine 779. A Phosphothreonine modification is found at threonine 783. Residues proline 784, threonine 804, arginine 812, lysine 826, serine 833, serine 854, proline 871, and proline 894 each carry the phosphoserine modification. Residues 826–839 (KVSPRAASPAKPSS) show a composition bias toward low complexity. A disordered region spans residues 826–916 (KVSPRAASPA…RPSFSTRNAG (91 aa)). Positions 866-880 (GLYTSPGQDSLQPTA) are enriched in polar residues.

The protein belongs to the synaptopodin family. As to quaternary structure, interacts with BAIAP1. Interacts with actin. Interacts (via PPxY motifs) with WWC1 (via WW domains). O-glycosylated. Expressed in cerebral cortex.

The protein resides in the cytoplasm. It is found in the cytoskeleton. It localises to the cell junction. The protein localises to the tight junction. Its subcellular location is the perikaryon. The protein resides in the cell projection. It is found in the dendritic spine. It localises to the postsynaptic density. The protein localises to the synapse. Its subcellular location is the cytosol. Functionally, actin-associated protein that may play a role in modulating actin-based shape and motility of dendritic spines and renal podocyte foot processes. Seems to be essential for the formation of spine apparatuses in spines of telencephalic neurons, which is involved in synaptic plasticity. This Homo sapiens (Human) protein is Synaptopodin (SYNPO).